Here is an 82-residue protein sequence, read N- to C-terminus: Small ribosomal subunit protein uS17 (82 aa).

Belongs to the universal ribosomal protein uS17 family. As to quaternary structure, part of the 30S ribosomal subunit.

One of the primary rRNA binding proteins, it binds specifically to the 5'-end of 16S ribosomal RNA. This Synechococcus elongatus (strain ATCC 33912 / PCC 7942 / FACHB-805) (Anacystis nidulans R2) protein is Small ribosomal subunit protein uS17.